The chain runs to 327 residues: L-lactate dehydrogenase (327 aa).

Residues V18, D39, K44, Y69, and G83–A84 contribute to the NAD(+) site. Residues Q86, R92, and N124–D127 contribute to the substrate site. NAD(+) is bound by residues A122–N124 and S147. D152 to R155 contacts substrate. Beta-D-fructose 1,6-bisphosphate-binding residues include R157 and H172. H179 acts as the Proton acceptor in catalysis. Y224 is modified (phosphotyrosine). A substrate-binding site is contributed by T233.

This sequence belongs to the LDH/MDH superfamily. LDH family. In terms of assembly, homotetramer.

The protein resides in the cytoplasm. The enzyme catalyses (S)-lactate + NAD(+) = pyruvate + NADH + H(+). Its pathway is fermentation; pyruvate fermentation to lactate; (S)-lactate from pyruvate: step 1/1. Allosterically activated by fructose 1,6-bisphosphate (FBP). Its function is as follows. Catalyzes the conversion of lactate to pyruvate. The polypeptide is L-lactate dehydrogenase (Streptococcus pyogenes serotype M3 (strain SSI-1)).